Consider the following 102-residue polypeptide: DET1- and DDB1-associated protein 1 (102 aa).

The segment at 67-102 (NAAKKRDQEQVEIEGENSAPPRKIARTDSQDMNEDT) is disordered.

This sequence belongs to the DDA1 family. As to quaternary structure, component of numerous DCX (DDB1-CUL4-X-box) E3 ubiquitin-protein ligase complexes which consist of a core of DDB1, cullin-4 (CUL4A or CUL4B), DDA1 and RBX1.

It participates in protein modification; protein ubiquitination. Its function is as follows. Functions as a component of numerous distinct DCX (DDB1-CUL4-X-box) E3 ubiquitin-protein ligase complexes which mediate the ubiquitination and subsequent proteasomal degradation of target proteins. In the DCX complexes, acts as a scaffolding subunit required to stabilize the complex. This Gallus gallus (Chicken) protein is DET1- and DDB1-associated protein 1.